We begin with the raw amino-acid sequence, 231 residues long: GrpE protein homolog, mitochondrial (231 aa).

The interval 49 to 71 (SEKAGEKAEEKAEEQNLSAEEQK) is disordered.

It belongs to the GrpE family. As to quaternary structure, component of the PAM complex, at least composed of mtHsp70, MGE1, TIM44, PAM16, PAM17 and PAM18.

It localises to the mitochondrion matrix. Its function is as follows. Essential component of the PAM complex, a complex required for the translocation of transit peptide-containing proteins from the inner membrane into the mitochondrial matrix in an ATP-dependent manner. Seems to control the nucleotide-dependent binding of SSC1 to substrate proteins. This chain is GrpE protein homolog, mitochondrial (mge1), found in Candida glabrata (strain ATCC 2001 / BCRC 20586 / JCM 3761 / NBRC 0622 / NRRL Y-65 / CBS 138) (Yeast).